A 523-amino-acid polypeptide reads, in one-letter code: Sucrose 6(F)-phosphate phosphorylase (523 aa).

Sucrose 6(F)-phosphate-binding positions include Asp58, His96, 221–223, Glu264, 326–327, and Lys434; these read RLD and HD. Asp223 serves as the catalytic Nucleophile. The active-site Proton donor/acceptor is the Glu264.

It belongs to the glycosyl hydrolase 13 family. Sucrose phosphorylase subfamily. In terms of assembly, monomer.

It carries out the reaction sucrose 6(F)-phosphate + phosphate = beta-D-fructose 6-phosphate + alpha-D-glucose 1-phosphate. In terms of biological role, catalyzes the reversible phosphorolysis of sucrose 6(F)-phosphate into alpha-D-glucose 1-phosphate (Glc1P) and D-fructose 6-phosphate. May be involved in a new pathway for the degradation of sucrose, which could become phosphorylated on its fructose moiety during uptake via a PTS system. Shows strict specificity since it does not catalyze reactions with alternative substrates. This chain is Sucrose 6(F)-phosphate phosphorylase, found in Ilumatobacter coccineus (strain NBRC 103263 / KCTC 29153 / YM16-304).